The following is a 601-amino-acid chain: Elongation factor 4 (601 aa).

The 183-residue stretch at 7–189 (SHIRNFSIIA…SIVQLVPPPQ (183 aa)) folds into the tr-type G domain. GTP contacts are provided by residues 19–24 (DHGKST) and 136–139 (NKID).

Belongs to the TRAFAC class translation factor GTPase superfamily. Classic translation factor GTPase family. LepA subfamily.

The protein localises to the cell inner membrane. The catalysed reaction is GTP + H2O = GDP + phosphate + H(+). Required for accurate and efficient protein synthesis under certain stress conditions. May act as a fidelity factor of the translation reaction, by catalyzing a one-codon backward translocation of tRNAs on improperly translocated ribosomes. Back-translocation proceeds from a post-translocation (POST) complex to a pre-translocation (PRE) complex, thus giving elongation factor G a second chance to translocate the tRNAs correctly. Binds to ribosomes in a GTP-dependent manner. The sequence is that of Elongation factor 4 from Trichodesmium erythraeum (strain IMS101).